The chain runs to 621 residues: Interleukin-1 receptor-associated kinase-like 2 (621 aa).

The Death domain maps to 13-94 (LDDLCRNMDT…RAAQIILNWK (82 aa)). The interval 113 to 175 (GKPLAASVRN…TASADSKDFS (63 aa)) is disordered. Residues 157–169 (ASSSLKTNQTASA) show a composition bias toward polar residues. The Protein kinase domain maps to 206–476 (FNPSHKISEG…AEALVMAACL (271 aa)). Residues 212–220 (ISEGTFADV), K233, and 333–336 (KSSN) contribute to the ATP site. Residues 503–522 (ETSLPCSGLSEGTGSSFNTP) are compositionally biased toward polar residues. Residues 503–534 (ETSLPCSGLSEGTGSSFNTPEETDDVDNSSFD) are disordered.

It belongs to the protein kinase superfamily. TKL Ser/Thr protein kinase family. Pelle subfamily. As to quaternary structure, interacts with MYD88. IL-1 stimulation leads to the formation of a signaling complex which dissociates from the IL-1 receptor following the binding of PELI1.

Functionally, binds to the IL-1 type I receptor following IL-1 engagement, triggering intracellular signaling cascades leading to transcriptional up-regulation and mRNA stabilization. The protein is Interleukin-1 receptor-associated kinase-like 2 (IRAK2) of Bos taurus (Bovine).